Reading from the N-terminus, the 260-residue chain is Winged helix repair factor 1 (260 aa).

Winged helix domain regions lie at residues 38-110, 126-185, and 186-260; these read FTED…MVVM, SRAT…LAVP, and GAGR…ISET.

The protein belongs to the STK19 family. Monomer in solution. Homodimer; when bound to DNA. Component of a transcription-coupled nucleotide excision repair (TC-NER) complex which assembles and interacts with the multiprotein RNA polymerase II complex when it stalls at DNA lesions.

It is found in the nucleus. Functionally, DNA-binding protein which is required for efficient transcription-coupled nucleotide excision repair (TC-NER). Acts as part of a TC-NER complex which assembles and interacts with RNA polymerase II (RNAPII) when it stalls at DNA lesions. This Xenopus laevis (African clawed frog) protein is Winged helix repair factor 1.